A 515-amino-acid polypeptide reads, in one-letter code: Tripartite motif-containing protein 5 (515 aa).

The residue at position 2 (alanine 2) is an N-acetylalanine. An RING-type zinc finger spans residues cysteine 15 to arginine 60. Phosphoserine is present on serine 87. The B box-type zinc finger occupies glutamine 92–methionine 133. Zn(2+)-binding residues include cysteine 97, histidine 100, cysteine 119, and histidine 125. Residues alanine 137–glutamine 225 adopt a coiled-coil conformation. The required for interaction with GABARAP and for autophagy stretch occupies residues phenylalanine 187 to asparagine 200. A B30.2/SPRY domain is found at leucine 283–serine 515.

It belongs to the TRIM/RBCC family. Can form homodimers and homotrimers. In addition to lower-order dimerization, also exhibits a higher-order multimerization and both low- and high-order multimerizations are essential for its restriction activity. Interacts with BTBD1 and BTBD2. Interacts with PSMC4, PSMC5, PSMD7 and HSPA8/HSC70. Interacts (via B30.2/SPRY domain) with HSPA1A/B. Interacts with PSMC2, MAP3K7/TAK1, TAB2 and TAB3. Interacts with SQSTM1. Interacts with TRIM6 and TRIM34. Interacts with ULK1 (phosphorylated form), GABARAP, GABARAPL1, GABARAPL2, MAP1LC3A, MAP1LC3C and BECN1. In terms of processing, degraded in a proteasome-independent fashion in the absence of viral infection but in a proteasome-dependent fashion following exposure to restriction sensitive virus. Post-translationally, autoubiquitinated in a RING finger- and UBE2D2-dependent manner. Monoubiquitinated by TRIM21. Deubiquitinated by Yersinia YopJ. Ubiquitination may not lead to proteasomal degradation.

The protein localises to the cytoplasm. It is found in the nucleus. It catalyses the reaction S-ubiquitinyl-[E2 ubiquitin-conjugating enzyme]-L-cysteine + [acceptor protein]-L-lysine = [E2 ubiquitin-conjugating enzyme]-L-cysteine + N(6)-ubiquitinyl-[acceptor protein]-L-lysine.. The protein operates within protein modification; protein ubiquitination. Its function is as follows. Capsid-specific restriction factor that prevents infection from non-host-adapted retroviruses. Blocks viral replication early in the life cycle, after viral entry but before reverse transcription. In addition to acting as a capsid-specific restriction factor, also acts as a pattern recognition receptor that activates innate immune signaling in response to the retroviral capsid lattice. Binding to the viral capsid triggers its E3 ubiquitin ligase activity, and in concert with the heterodimeric ubiquitin conjugating enzyme complex UBE2V1-UBE2N (also known as UBC13-UEV1A complex) generates 'Lys-63'-linked polyubiquitin chains, which in turn are catalysts in the autophosphorylation of the MAP3K7/TAK1 complex (includes TAK1, TAB2, and TAB3). Activation of the MAP3K7/TAK1 complex by autophosphorylation results in the induction and expression of NF-kappa-B and MAPK-responsive inflammatory genes, thereby leading to an innate immune response in the infected cell. Restricts infection by human immunodeficiency virus type 1 (HIV-1) and N-tropic murine leukemia virus (N-MLV). Plays a role in regulating autophagy through activation of autophagy regulator BECN1 by causing its dissociation from its inhibitors BCL2 and TAB2. The sequence is that of Tripartite motif-containing protein 5 (TRIM5) from Chlorocebus pygerythrus (Vervet monkey).